We begin with the raw amino-acid sequence, 410 residues long: Beta-arrestin-1 (410 aa).

Residues 1–163 are interaction with SRC; that stretch reads MGDKGTRVFK…LEEKIHKRNS (163 aa). The interaction with CHRM2 stretch occupies residues 45–86; the sequence is PEYLKERRVYVTLTCAFRYGREDLDVLGLTFRKDLFVANVQS. Tyr47 is modified (phosphotyrosine). 1D-myo-inositol hexakisphosphate contacts are provided by Lys250, Met255, Lys324, and Lys326. Positions 318–410 are interaction with TRAF6; sequence IVSYKVKVKL…GTGSPQLNNR (93 aa). The [DE]-X(1,2)-F-X-X-[FL]-X-X-X-R motif motif lies at 385–395; sequence RQRLKGMKDDK. The disordered stretch occupies residues 389–410; the sequence is KGMKDDKEEEENGTGSPQLNNR. A compositionally biased stretch (polar residues) spans 401 to 410; that stretch reads GTGSPQLNNR. Position 404 is a phosphoserine; by GRK5 (Ser404).

The protein belongs to the arrestin family. In terms of assembly, monomer. Homodimer. Homooligomer; the self-association is mediated by InsP6-binding. Heterooligomer with ARRB2; the association is mediated by InsP6-binding. Interacts with ADRB2 (phosphorylated). Interacts with CHRM2 (phosphorylated). Interacts with LHCGR. Interacts with CYTH2 and CASR. Interacts with AP2B1 (dephosphorylated); phosphorylation of AP2B1 disrupts the interaction. Interacts (dephosphorylated at Ser-404) with CLTC. Interacts with CCR2 and GRK2. Interacts with CRR5. Interacts with PTAFR (phosphorylated on serine residues). Interacts with CLTC and MAP2K3. Interacts with CREB1. Interacts with TRAF6. Interacts with IGF1R and MDM2. Interacts with C5AR1. Interacts with PDE4D. Interacts with SRC (via the SH3 domain and the protein kinase domain); the interaction is independent of the phosphorylation state of SRC C-terminus. Interacts with TACR1. Interacts with RAF1. Interacts with CHUK, IKBKB and MAP3K14. Interacts with DVL1; the interaction is enhanced by phosphorylation of DVL1. Interacts with DVL2; the interaction is enhanced by phosphorylation of DVL2. Interacts with IGF1R. Associates with MAP kinase p38. Part of a MAPK signaling complex consisting of TACR1, ARRB1, SRC, MAPK1 (activated) and MAPK3 (activated). Part of a MAPK signaling complex consisting of F2RL1, ARRB1, RAF1, MAPK1 (activated) and MAPK3 (activated). Interacts with GPR143. Interacts with MAP2K4/MKK4. Interacts with HCK and CXCR1 (phosphorylated). Interacts with ACKR3 and ACKR4. Interacts with ARRDC1; the interaction is direct. Interacts with GPR61, GPR62 and GPR135. Constitutively phosphorylated at in the cytoplasm. At the plasma membrane, is rapidly dephosphorylated, a process that is required for clathrin binding and ADRB2 endocytosis but not for ADRB2 binding and desensitization. Once internalized, is rephosphorylated. Post-translationally, the ubiquitination status appears to regulate the formation and trafficking of beta-arrestin-GPCR complexes and signaling. Ubiquitination appears to occur GPCR-specific. Ubiquitinated by MDM2; the ubiquitination is required for rapid internalization of ADRB2. Deubiquitinated by USP33; the deubiquitination leads to a dissociation of the beta-arrestin-GPCR complex. Stimulation of a class A GPCR, such as ADRB2, induces transient ubiquitination and subsequently promotes association with USP33.

The protein localises to the cytoplasm. It is found in the nucleus. The protein resides in the cell membrane. It localises to the membrane. Its subcellular location is the clathrin-coated pit. The protein localises to the cell projection. It is found in the pseudopodium. The protein resides in the cytoplasmic vesicle. Functions in regulating agonist-mediated G-protein coupled receptor (GPCR) signaling by mediating both receptor desensitization and resensitization processes. During homologous desensitization, beta-arrestins bind to the GPRK-phosphorylated receptor and sterically preclude its coupling to the cognate G-protein; the binding appears to require additional receptor determinants exposed only in the active receptor conformation. The beta-arrestins target many receptors for internalization by acting as endocytic adapters (CLASPs, clathrin-associated sorting proteins) and recruiting the GPRCs to the adapter protein 2 complex 2 (AP-2) in clathrin-coated pits (CCPs). However, the extent of beta-arrestin involvement appears to vary significantly depending on the receptor, agonist and cell type. Internalized arrestin-receptor complexes traffic to intracellular endosomes, where they remain uncoupled from G-proteins. Two different modes of arrestin-mediated internalization occur. Class A receptors, like ADRB2, OPRM1, ENDRA, D1AR and ADRA1B dissociate from beta-arrestin at or near the plasma membrane and undergo rapid recycling. Class B receptors, like AVPR2, AGTR1, NTSR1, TRHR and TACR1 internalize as a complex with arrestin and traffic with it to endosomal vesicles, presumably as desensitized receptors, for extended periods of time. Receptor resensitization then requires that receptor-bound arrestin is removed so that the receptor can be dephosphorylated and returned to the plasma membrane. Involved in internalization of P2RY4 and UTP-stimulated internalization of P2RY2. Involved in phosphorylation-dependent internalization of OPRD1 ands subsequent recycling. Involved in the degradation of cAMP by recruiting cAMP phosphodiesterases to ligand-activated receptors. Beta-arrestins function as multivalent adapter proteins that can switch the GPCR from a G-protein signaling mode that transmits short-lived signals from the plasma membrane via small molecule second messengers and ion channels to a beta-arrestin signaling mode that transmits a distinct set of signals that are initiated as the receptor internalizes and transits the intracellular compartment. Acts as a signaling scaffold for MAPK pathways such as MAPK1/3 (ERK1/2). ERK1/2 activated by the beta-arrestin scaffold is largely excluded from the nucleus and confined to cytoplasmic locations such as endocytic vesicles, also called beta-arrestin signalosomes. Recruits c-Src/SRC to ADRB2 resulting in ERK activation. GPCRs for which the beta-arrestin-mediated signaling relies on both ARRB1 and ARRB2 (codependent regulation) include ADRB2, F2RL1 and PTH1R. For some GPCRs the beta-arrestin-mediated signaling relies on either ARRB1 or ARRB2 and is inhibited by the other respective beta-arrestin form (reciprocal regulation). Inhibits ERK1/2 signaling in AGTR1- and AVPR2-mediated activation (reciprocal regulation). Is required for SP-stimulated endocytosis of NK1R and recruits c-Src/SRC to internalized NK1R resulting in ERK1/2 activation, which is required for the antiapoptotic effects of SP. Is involved in proteinase-activated F2RL1-mediated ERK activity. Acts as a signaling scaffold for the AKT1 pathway. Is involved in alpha-thrombin-stimulated AKT1 signaling. Is involved in IGF1-stimulated AKT1 signaling leading to increased protection from apoptosis. Involved in activation of the p38 MAPK signaling pathway and in actin bundle formation. Involved in F2RL1-mediated cytoskeletal rearrangement and chemotaxis. Involved in AGTR1-mediated stress fiber formation by acting together with GNAQ to activate RHOA. Appears to function as signaling scaffold involved in regulation of MIP-1-beta-stimulated CCR5-dependent chemotaxis. Involved in attenuation of NF-kappa-B-dependent transcription in response to GPCR or cytokine stimulation by interacting with and stabilizing CHUK. May serve as nuclear messenger for GPCRs. Involved in OPRD1-stimulated transcriptional regulation by translocating to CDKN1B and FOS promoter regions and recruiting EP300 resulting in acetylation of histone H4. Involved in regulation of LEF1 transcriptional activity via interaction with DVL1 and/or DVL2 Also involved in regulation of receptors other than GPCRs. Involved in Toll-like receptor and IL-1 receptor signaling through the interaction with TRAF6 which prevents TRAF6 autoubiquitination and oligomerization required for activation of NF-kappa-B and JUN. Involved in IL8-mediated granule release in neutrophils. Binds phosphoinositides. Binds inositolhexakisphosphate (InsP6). Required for atypical chemokine receptor ACKR2-induced RAC1-LIMK1-PAK1-dependent phosphorylation of cofilin (CFL1) and for the up-regulation of ACKR2 from endosomal compartment to cell membrane, increasing its efficiency in chemokine uptake and degradation. Involved in the internalization of the atypical chemokine receptor ACKR3. Negatively regulates the NOTCH signaling pathway by mediating the ubiquitination and degradation of NOTCH1 by ITCH. Participates in the recruitment of the ubiquitin-protein ligase to the receptor. This Macaca fascicularis (Crab-eating macaque) protein is Beta-arrestin-1 (ARRB1).